We begin with the raw amino-acid sequence, 80 residues long: MVTMEEELIAYIARALVDRPGEVTVTKSPGEGLEILQLRVASEDVGKVIGKHGRIARALRTLLSASAHASQTRYALEIID.

In terms of domain architecture, KH spans 33–80 (LEILQLRVASEDVGKVIGKHGRIARALRTLLSASAHASQTRYALEIID).

It belongs to the KhpA RNA-binding protein family. In terms of assembly, forms a complex with KhpB.

The protein resides in the cytoplasm. Functionally, a probable RNA chaperone. Forms a complex with KhpB which binds to cellular RNA and controls its expression. Plays a role in peptidoglycan (PG) homeostasis and cell length regulation. The protein is RNA-binding protein KhpA of Treponema pallidum (strain Nichols).